A 447-amino-acid chain; its full sequence is GTPase Der (447 aa).

EngA-type G domains lie at 3–167 (PVIA…FAER) and 181–354 (TRIA…AAAM). Residues 9–16 (GRPNVGKS), 56–60 (DTGGF), 119–122 (NKAE), 187–194 (GRPNVGKS), 234–238 (DTAGL), and 299–302 (NKWD) each bind GTP. The KH-like domain maps to 355-439 (VKLPTPKLTR…PLRIEFRTNK (85 aa)).

The protein belongs to the TRAFAC class TrmE-Era-EngA-EngB-Septin-like GTPase superfamily. EngA (Der) GTPase family. As to quaternary structure, associates with the 50S ribosomal subunit.

Its function is as follows. GTPase that plays an essential role in the late steps of ribosome biogenesis. The sequence is that of GTPase Der from Ralstonia nicotianae (strain ATCC BAA-1114 / GMI1000) (Ralstonia solanacearum).